Reading from the N-terminus, the 317-residue chain is tRNA(Ile)-lysidine synthase (317 aa).

Residue 30-35 participates in ATP binding; the sequence is SGGSDS.

It belongs to the tRNA(Ile)-lysidine synthase family.

It is found in the cytoplasm. It catalyses the reaction cytidine(34) in tRNA(Ile2) + L-lysine + ATP = lysidine(34) in tRNA(Ile2) + AMP + diphosphate + H(+). Ligates lysine onto the cytidine present at position 34 of the AUA codon-specific tRNA(Ile) that contains the anticodon CAU, in an ATP-dependent manner. Cytidine is converted to lysidine, thus changing the amino acid specificity of the tRNA from methionine to isoleucine. The chain is tRNA(Ile)-lysidine synthase from Chlamydia caviae (strain ATCC VR-813 / DSM 19441 / 03DC25 / GPIC) (Chlamydophila caviae).